Here is a 131-residue protein sequence, read N- to C-terminus: Predicted GPI-anchored protein 26 (131 aa).

The signal sequence occupies residues 1 to 18 (MHFSKIIAGSALSSVALA). N-linked (GlcNAc...) asparagine glycosylation is found at Asn-22 and Asn-104. A lipid anchor (GPI-anchor amidated glycine) is attached at Gly-110. Positions 111-131 (AGSKNVASALVGVVAIAAAMM) are cleaved as a propeptide — removed in mature form.

Its subcellular location is the cell membrane. Its function is as follows. GPI-anchored protein involved in proper cell wall integrity. Does not seem to be directly involved in the synthesis of the cell wall. Required for normal virulence in a mouse model of disseminated candidiasis. This Candida albicans (strain SC5314 / ATCC MYA-2876) (Yeast) protein is Predicted GPI-anchored protein 26 (PGA26).